The sequence spans 226 residues: MSSGFEFQLASYTTMPVTLLETLYSMRKKIFSDRLEWKVRVSHAFEFDEYDNAATTYLVGSWNGVPLAGLRLINTCDPYMLEGPFRSFFDCPAPKNAAMAESSRFFVDTARARSLGILHAPLTEMLLFSMHNHAALSGLQSIITVVSKAMARIVRKSGWEHHVLSTGEASPGETVLLLEMPVTADNHQRLLGNIALRQPVTDDLLRWPIALGVSGSAPQACMHSAA.

It belongs to the autoinducer synthase family.

It catalyses the reaction a fatty acyl-[ACP] + S-adenosyl-L-methionine = an N-acyl-L-homoserine lactone + S-methyl-5'-thioadenosine + holo-[ACP] + H(+). Required for the synthesis of OHHL (N-(3-oxohexanoyl)-L-homoserine lactone), an autoinducer molecule. The sequence is that of Acyl-homoserine-lactone synthase (psyI) from Pseudomonas amygdali pv. tabaci (Pseudomonas syringae pv. tabaci).